The following is a 252-amino-acid chain: Type II secretion system protein N (252 aa).

Topologically, residues 1 to 4 are cytoplasmic; it reads MKQK. A helical membrane pass occupies residues 5-25; the sequence is VLIAALFLVAYLGFLLVKLPA. Over 26–252 the chain is Periplasmic; the sequence is TLVVRHLPLP…RFPLRYQGRI (227 aa).

The protein belongs to the GSP N family.

The protein localises to the cell inner membrane. Its function is as follows. Involved in a type II secretion system (T2SS, formerly general secretion pathway, GSP) for the export of proteins. This is Type II secretion system protein N (exeN) from Aeromonas hydrophila.